The primary structure comprises 874 residues: DNA primase (874 aa).

Residues 786-824 (CLRHTHRASSKNVRVFLVLYYTSQAITVTFMSQCFAGRC) form a CHC2-type zinc finger. A compositionally biased stretch (polar residues) spans 848-857 (ASQDSTTSQL). A disordered region spans residues 848–874 (ASQDSTTSQLARRRDRQDGSFSETLPN).

This sequence belongs to the herpesviridae DNA primase family. In terms of assembly, associates with the helicase and the primase-associated factor to form the helicase-primase factor.

The protein resides in the host nucleus. Essential component of the helicase/primase complex. Unwinds the DNA at the replication forks and generates single-stranded DNA for both leading and lagging strand synthesis. The primase initiates primer synthesis and thereby produces large amount of short RNA primers on the lagging strand that the polymerase elongates using dNTPs. The chain is DNA primase from Epstein-Barr virus (strain B95-8) (HHV-4).